The following is a 946-amino-acid chain: Increased sodium tolerance protein 2 (946 aa).

At M1–S121 the chain is on the cytoplasmic side. A helical membrane pass occupies residues L122–L142. Residues S143 to E153 lie on the Extracellular side of the membrane. The helical transmembrane segment at F154–L174 threads the bilayer. Residues Y175 to C217 lie on the Cytoplasmic side of the membrane. The chain crosses the membrane as a helical span at residues F218–A238. At L239–S253 the chain is on the extracellular side. Residues I254–Y274 form a helical membrane-spanning segment. Residues N275–N302 lie on the Cytoplasmic side of the membrane. The chain crosses the membrane as a helical span at residues F303 to P323. Topologically, residues M324–Q447 are extracellular. The chain crosses the membrane as a helical span at residues F448–V468. Topologically, residues N469–K505 are cytoplasmic. The chain crosses the membrane as a helical span at residues L506–T526. The Extracellular portion of the chain corresponds to A527–W563. A helical transmembrane segment spans residues I564–F584. Residues S585–L946 are Cytoplasmic-facing. Disordered regions lie at residues E617–S638 and T665–R718. Residues N628–S638 are compositionally biased toward basic and acidic residues. Phosphoserine is present on S638. Residues P671–S689 show a composition bias toward low complexity. At T701 the chain carries Phosphothreonine. Phosphoserine occurs at positions 704 and 720. Phosphothreonine is present on T726. S729 carries the phosphoserine modification. At Y730 the chain carries Phosphotyrosine. S757 bears the Phosphoserine mark. A disordered region spans residues R759–P784. A compositionally biased stretch (low complexity) spans S764–T775. Phosphoserine occurs at positions 793, 844, and 847. Positions V846 to L946 are disordered. The residue at position 850 (T850) is a Phosphothreonine. Positions S859 to I868 are enriched in polar residues. The segment covering T884 to T893 has biased composition (low complexity). Positions P895–R905 are enriched in basic residues. A compositionally biased stretch (low complexity) spans S916–A927. The span at K931–L946 shows a compositional bias: basic residues.

In terms of assembly, interacts with BTN2.

Its subcellular location is the cell membrane. May be involved in ion homeostasis together with BTN1 or BTN2. The protein is Increased sodium tolerance protein 2 (IST2) of Saccharomyces cerevisiae (strain ATCC 204508 / S288c) (Baker's yeast).